We begin with the raw amino-acid sequence, 330 residues long: Small ribosomal subunit protein uS2 (330 aa).

The protein belongs to the universal ribosomal protein uS2 family.

This chain is Small ribosomal subunit protein uS2, found in Bradyrhizobium sp. (strain BTAi1 / ATCC BAA-1182).